A 372-amino-acid polypeptide reads, in one-letter code: Tetraacyldisaccharide 4'-kinase (372 aa).

60–67 (TVGGSGKT) is an ATP binding site.

It belongs to the LpxK family.

The catalysed reaction is a lipid A disaccharide + ATP = a lipid IVA + ADP + H(+). Its pathway is glycolipid biosynthesis; lipid IV(A) biosynthesis; lipid IV(A) from (3R)-3-hydroxytetradecanoyl-[acyl-carrier-protein] and UDP-N-acetyl-alpha-D-glucosamine: step 6/6. Transfers the gamma-phosphate of ATP to the 4'-position of a tetraacyldisaccharide 1-phosphate intermediate (termed DS-1-P) to form tetraacyldisaccharide 1,4'-bis-phosphate (lipid IVA). The chain is Tetraacyldisaccharide 4'-kinase from Psychrobacter cryohalolentis (strain ATCC BAA-1226 / DSM 17306 / VKM B-2378 / K5).